Here is a 507-residue protein sequence, read N- to C-terminus: Maturase K (507 aa).

It belongs to the intron maturase 2 family. MatK subfamily.

Its subcellular location is the plastid. The protein localises to the chloroplast. Usually encoded in the trnK tRNA gene intron. Probably assists in splicing its own and other chloroplast group II introns. The protein is Maturase K of Fagopyrum tataricum (Tartarian buckwheat).